The primary structure comprises 70 residues: Mu-conotoxin PnIVB (70 aa).

Positions 1 to 20 (MMSKLGVLLIICLLLCPLTA) are cleaved as a signal peptide. A propeptide spanning residues 21–51 (VPQDGDQPADQPAERMQDDISSEHHPFFDPV) is cleaved from the precursor.

In terms of processing, contains 3 disulfide bonds. They are not added, since framework IV presents two different connectivities (I-V, II-III, IV-VI and I-III, II-V, IV-VI). As to expression, expressed by the venom duct.

It localises to the secreted. Mu-conotoxins block voltage-gated sodium channels (Nav). Blocks reversibly sodium channels in molluskan neurons, but has no effect on sodium currents in bovine chromaffin cells or in rat brain synaptosomes. Induces paralysis in bivalve mollusks (Mytilus). No effect are observed on fish (Gambusia) and fly larvae (Sarcophaga). Is approximately 6 times more potent than PnIVA in blockade of the sodium current in Lymnaea neurons. This is Mu-conotoxin PnIVB from Conus pennaceus (Feathered cone).